A 972-amino-acid polypeptide reads, in one-letter code: MNTNKATATYLKSIMLPETGPASIPDDITERHILKQETSSYNLEVSESGSGVLVCFPGAPGSRIGAHYRWNANQTGLEFDQWLETSQDLKKAFNYGRLISRKYDIQSSTLPAGLYALNGTLNAATFEGSLSEVESLTYNSLMSLTTNPQDKVNNQLVTKGVTVLNLPTGFDKPYVRLEDETPQGLQSMNGAKMRCTAAIAPRRYEIDLPSQRLPPVPATGTLTTLYEGNADIVNSTTVTGDINFSLAEQPADETKFDFQLDFMGLDNDVPVVTVVSSVLATNDNYRGVSAKMTQSIPTENITKPITRVKLSYKINQQTAIGNVATLGTMGPASVSFSSGNGNVPGVLRPITLVAYEKMTPLSILTVAGVSNYELIPNPELLKNMVTRYGKYDPEGLNYAKMILSHREELDIRTVWRTEEYKERTRVFNEITDFSSDLPTSKAWGWRDIVRGIRKVAAPVLSTLFPMAAPLIGMADQFIGDLTKTNAAGGRYHSMAAGGRYKDVLESWASGGPDGKFSRALKNRLESANYEEVELPPPSKGVIVPVVHTVKSAPGEAFGSLAIIIPGEYPELLDANQQVLSHFANDTGSVWGIGEDIPFEGDNMCYTALPLKEIKRNGNIVVEKIFAGPIMGPSAQLGLSLLVNDIEDGVPRMVFTGEIADDEETIIPICGVDIKAIAAHEQGLPLIGNQPGVDEEVRNTSLAAHLIQTGTLPVQRAKGSNKRIKYLGELMASNASGMDEELQRLLNATMARAKEVQDAEIYKLLKLMAWTRKNDLTDHMYEWSKEDPDALKFGKLISTPPKHPEKPKGPDQHHAQEARATRISLDAVRAGADFATPEWVALNNYRGPSPGQFKYYLITGREPEPGDEYEDYIKQPIVKPTDMNKIRRLANSVYGLPHQEPAPEEFYDAVAAVFAQNGGRGPDQDQMQDLRELARQMKRRPRNADAPRRTRAPAEPAPPGRSRFTPSGDNAEV.

Residue Asp26 coordinates a divalent metal cation. The 226-residue stretch at 509-734 (SGGPDGKFSR…YLGELMASNA (226 aa)) folds into the Peptidase S50 domain. The Nucleophile role is filled by Ser633. Residue Lys674 is part of the active site. Disordered regions lie at residues 794–817 (KLISTPPKHPEKPKGPDQHHAQEA) and 916–972 (NGGR…NAEV). The segment covering 801–817 (KHPEKPKGPDQHHAQEA) has biased composition (basic and acidic residues). Residues 963–972 (FTPSGDNAEV) show a composition bias toward polar residues.

Homotrimer. A central divalent metal (possibly cobalt) stabilizes the VP2 trimer. As to quaternary structure, homodimer. interacts (via C-terminus) with VP1 in the cytoplasm. Interacts with VP2. Post-translationally, specific enzymatic cleavages yield mature proteins. The capsid assembly seems to be regulated by polyprotein processing. The protease VP4 cleaves itself off the polyprotein, thus releasing pre-VP2 and VP3 within the infected cell. During capsid assembly, the C-terminus of pre-VP2 is further processed by VP4, giving rise to VP2, the external capsid protein and three small peptides that all stay closely associated with the capsid.

Its subcellular location is the virion. It is found in the host cytoplasm. Its function is as follows. Capsid protein VP2 self assembles to form an icosahedral capsid with a T=13 symmetry, about 70 nm in diameter, and consisting of 260 VP2 trimers. The capsid encapsulates the genomic dsRNA. VP2 is also involved in attachment and entry into the host cell. The precursor of VP2 plays an important role in capsid assembly. First, pre-VP2 and VP2 oligomers assemble to form a procapsid. Then, the pre-VP2 intermediates may be processed into VP2 proteins by proteolytic cleavage mediated by VP4 to obtain the mature virion. The final capsid is composed of pentamers and hexamers but VP2 has a natural tendency to assemble into all-pentameric structures. Therefore pre-VP2 may be required to allow formation of the hexameric structures. Functionally, protease VP4 is a serine protease that cleaves the polyprotein into its final products. Pre-VP2 is first partially cleaved, and may be completely processed by VP4 upon capsid maturation. In terms of biological role, capsid protein VP3 plays a key role in virion assembly by providing a scaffold for the capsid made of VP2. May self-assemble to form a T=4-like icosahedral inner-capsid composed of at least 180 trimers. Plays a role in genomic RNA packaging by recruiting VP1 into the capsid and interacting with the dsRNA genome segments to form a ribonucleoprotein complex. Additionally, the interaction of the VP3 C-terminal tail with VP1 removes the inherent structural blockade of the polymerase active site. Thus, VP3 can also function as a transcriptional activator. Its function is as follows. Structural peptide 1 is a small peptide derived from pre-VP2 C-terminus. It destabilizes and perforates cell membranes, suggesting a role during entry. Structural peptide 2 is a small peptide derived from pVP2 C-terminus. It is not essential for the virus viability, but viral growth is affected when missing. Functionally, structural peptide 3 is a small peptide derived from pVP2 C-terminus. It is not essential for the virus viability, but viral growth is affected when missing. The chain is Structural polyprotein from Infectious pancreatic necrosis virus (strain Sp) (IPNV).